We begin with the raw amino-acid sequence, 465 residues long: ATP synthase subunit beta (465 aa).

152-159 (GGAGVGKT) is an ATP binding site.

The protein belongs to the ATPase alpha/beta chains family. In terms of assembly, F-type ATPases have 2 components, CF(1) - the catalytic core - and CF(0) - the membrane proton channel. CF(1) has five subunits: alpha(3), beta(3), gamma(1), delta(1), epsilon(1). CF(0) has three main subunits: a(1), b(2) and c(9-12). The alpha and beta chains form an alternating ring which encloses part of the gamma chain. CF(1) is attached to CF(0) by a central stalk formed by the gamma and epsilon chains, while a peripheral stalk is formed by the delta and b chains.

The protein resides in the cell inner membrane. The catalysed reaction is ATP + H2O + 4 H(+)(in) = ADP + phosphate + 5 H(+)(out). Its function is as follows. Produces ATP from ADP in the presence of a proton gradient across the membrane. The catalytic sites are hosted primarily by the beta subunits. This is ATP synthase subunit beta from Campylobacter curvus (strain 525.92).